The chain runs to 317 residues: METWQEVTVHVHRDAQEAVSNLLIETGSQGVAIADSADYIGQKDRFGELYPDVEQSDMIAITAYYPSSTNLADVIATINEQLAELASFGLQVGQVTVDSQELAEEDWADNWKKYYEPARITHDLTIVPSWTDYDASAGEKVIKLDPGMAFGTGTHPTTKMSLFALEQILRGGETVIDVGTGSGVLSIASSLLGAKTIYAYDLDDVAVRVAQENIDLNQGTDNIHVAAGDLLKEVSQEADVIVANILADILVLLTDDAYRLVKKEGYLILSGIISEKLDMVLEAAFSAGFFLETHMVQGEWNALVFKKTDDISGVIGG.

S-adenosyl-L-methionine-binding residues include threonine 158, glycine 179, aspartate 201, and asparagine 244.

The protein belongs to the methyltransferase superfamily. PrmA family.

It is found in the cytoplasm. The enzyme catalyses L-lysyl-[protein] + 3 S-adenosyl-L-methionine = N(6),N(6),N(6)-trimethyl-L-lysyl-[protein] + 3 S-adenosyl-L-homocysteine + 3 H(+). Its function is as follows. Methylates ribosomal protein L11. This Streptococcus pyogenes serotype M3 (strain ATCC BAA-595 / MGAS315) protein is Ribosomal protein L11 methyltransferase.